Consider the following 309-residue polypeptide: L-lactate dehydrogenase 2 (309 aa).

Residues Val16, Asp37, Tyr67, and 81–82 (GV) each bind NAD(+). Arg90 contributes to the substrate binding site. Residue Ser103 coordinates NAD(+). 122–125 (NPVD) serves as a coordination point for substrate. Thr145 is an NAD(+) binding site. 150-153 (DTAR) lines the substrate pocket. The active-site Proton acceptor is His177. A substrate-binding site is contributed by Thr227.

It belongs to the LDH/MDH superfamily. LDH family. In terms of assembly, homotetramer.

The protein resides in the cytoplasm. The enzyme catalyses (S)-lactate + NAD(+) = pyruvate + NADH + H(+). It participates in fermentation; pyruvate fermentation to lactate; (S)-lactate from pyruvate: step 1/1. In terms of biological role, catalyzes the conversion of lactate to pyruvate. This chain is L-lactate dehydrogenase 2, found in Lactiplantibacillus plantarum (strain ATCC BAA-793 / NCIMB 8826 / WCFS1) (Lactobacillus plantarum).